Here is a 156-residue protein sequence, read N- to C-terminus: Arginine repressor (156 aa).

It belongs to the ArgR family.

The protein resides in the cytoplasm. It participates in amino-acid biosynthesis; L-arginine biosynthesis [regulation]. Functionally, regulates arginine biosynthesis genes. This is Arginine repressor from Escherichia coli O81 (strain ED1a).